The sequence spans 285 residues: tRNA-cytidine(32) 2-sulfurtransferase (285 aa).

A PP-loop motif motif is present at residues 49–54 (SGGKDS). 3 residues coordinate [4Fe-4S] cluster: Cys124, Cys127, and Cys215.

This sequence belongs to the TtcA family. As to quaternary structure, homodimer. The cofactor is Mg(2+). [4Fe-4S] cluster serves as cofactor.

The protein localises to the cytoplasm. The catalysed reaction is cytidine(32) in tRNA + S-sulfanyl-L-cysteinyl-[cysteine desulfurase] + AH2 + ATP = 2-thiocytidine(32) in tRNA + L-cysteinyl-[cysteine desulfurase] + A + AMP + diphosphate + H(+). The protein operates within tRNA modification. Catalyzes the ATP-dependent 2-thiolation of cytidine in position 32 of tRNA, to form 2-thiocytidine (s(2)C32). The sulfur atoms are provided by the cysteine/cysteine desulfurase (IscS) system. The protein is tRNA-cytidine(32) 2-sulfurtransferase of Hahella chejuensis (strain KCTC 2396).